Consider the following 437-residue polypeptide: Mannan endo-1,4-beta-mannosidase A (437 aa).

The signal sequence occupies residues M1–A19. Positions A20 to R27 are excised as a propeptide. Residues A28–T376 form a catalytic region. Residues C53 and C56 are joined by a disulfide bond. N157 and N184 each carry an N-linked (GlcNAc...) asparagine glycan. E196 acts as the Proton donor/acceptor in catalysis. E196–R198 provides a ligand contact to substrate. A disulfide bridge links C199 with C202. E232 and W274 together coordinate substrate. N277 is a glycosylation site (N-linked (GlcNAc...) asparagine). An intrachain disulfide couples C292 to C299. The active-site Nucleophile is E303. C311 and C361 form a disulfide bridge. N355 is a glycosylation site (N-linked (GlcNAc...) asparagine). Residues G372–G399 are disordered. A linker region spans residues P377–G399. Low complexity predominate over residues S381–S392. The region spanning S400–L435 is the CBM1 domain.

This sequence belongs to the glycosyl hydrolase 5 (cellulase A) family. As to quaternary structure, monomer.

It is found in the secreted. It carries out the reaction Random hydrolysis of (1-&gt;4)-beta-D-mannosidic linkages in mannans, galactomannans and glucomannans.. Its function is as follows. Endo-1,4-mannanase that catalyzes the random hydrolysis of (1-&gt;4)-beta-D-mannosidic linkages in mannans and heteromannans. It is a crucial enzyme for depolymerization of seed galactomannans and wood galactoglucomannans. Active against locust bean gum and ivory nut mannan, releasing mainly tri- and disaccharides. Also has transglycosylation activity. Transglycosylation of two mannotrioses into a mannohexaose is the major transglycosylation route. This is Mannan endo-1,4-beta-mannosidase A from Hypocrea jecorina (strain ATCC 56765 / BCRC 32924 / NRRL 11460 / Rut C-30) (Trichoderma reesei).